A 268-amino-acid chain; its full sequence is MTHVFEVYPKVNIFLKILHKEGAYHKLISRMCLVKDKLKDIISVKSALSFSLKGDFDCPLEENSLFKALQILKNFLKSKNFSHSVIKSLDTLAIEVEKNIPTQAGLGGGSTDAGGLLYHLNQIFDWRLSLEELYSMGSLVGADTNFFISQYKSTNATSYGEVIENFEEEPLENRLEIYAPNHVFCSTKAVYQAYKPETCFSQAKEWLKKPSLECLKTYDRNGLNDLLKPALLTNQALKDIESELGKEWFFSGSGSAFFRLKPMQKGGE.

Lysine 10 is an active-site residue. 101–111 lines the ATP pocket; that stretch reads PTQAGLGGGST. Aspartate 143 is a catalytic residue.

It belongs to the GHMP kinase family. IspE subfamily.

The catalysed reaction is 4-CDP-2-C-methyl-D-erythritol + ATP = 4-CDP-2-C-methyl-D-erythritol 2-phosphate + ADP + H(+). Its pathway is isoprenoid biosynthesis; isopentenyl diphosphate biosynthesis via DXP pathway; isopentenyl diphosphate from 1-deoxy-D-xylulose 5-phosphate: step 3/6. Catalyzes the phosphorylation of the position 2 hydroxy group of 4-diphosphocytidyl-2C-methyl-D-erythritol. In Helicobacter pylori (strain ATCC 700392 / 26695) (Campylobacter pylori), this protein is 4-diphosphocytidyl-2-C-methyl-D-erythritol kinase.